A 788-amino-acid polypeptide reads, in one-letter code: Leucine-rich repeat and fibronectin type-III domain-containing protein 2 (788 aa).

Positions 1-20 (METLLGGLLAFGMAFAVVDA) are cleaved as a signal peptide. The LRRNT domain maps to 21 to 52 (CPKYCVCQNLSESLGTLCPSKGLLFVPPDIDR). The Extracellular portion of the chain corresponds to 21–534 (CPKYCVCQNL…MHSQILGGTM (514 aa)). N-linked (GlcNAc...) asparagine glycosylation is found at asparagine 29 and asparagine 74. LRR repeat units follow at residues 53-74 (RTVE…DFAN), 77-98 (GLVD…SFLD), 101-122 (SLRS…TLRG), 125-146 (NLQH…AFED), 150-171 (TLED…SVRR), 174-195 (NLHQ…TFAD), and 198-219 (KLAR…PIFA). One can recognise an LRRCT domain in the interval 242 to 288 (NPLHCNCELLWLRRLERDDDLKTCGSPGGLKGRYFWHIREEEFVCEP). The region spanning 289 to 375 (PLITQHTHKL…GEATATVEVS (87 aa)) is the Ig-like domain. Cysteine 310 and cysteine 359 form a disulfide bridge. Residues asparagine 332, asparagine 341, asparagine 384, and asparagine 457 are each glycosylated (N-linked (GlcNAc...) asparagine). Positions 383 to 423 (SNSTSRMAPPKSRLSDITGSSKTSRGGGGSGAGEPPKSTPE) are disordered. Positions 422–518 (PERAVLVSDV…GCAQFFTKAD (97 aa)) constitute a Fibronectin type-III domain. The helical transmembrane segment at 535 to 555 (ILVIGGIIVATLLVFIVILMV) threads the bilayer. At 556-788 (RYKVCNHDAP…SSEWVMESTV (233 aa)) the chain is on the cytoplasmic side. The span at 620–641 (CDSSSSSSLGSGEAAGLSRGPW) shows a compositional bias: low complexity. Disordered stretches follow at residues 620–655 (CDSS…PSLD) and 668–707 (SQRK…ATRA). Residues 642-651 (RLPPPAPRPK) show a composition bias toward pro residues. A PDZ-binding motif is present at residues 785–788 (ESTV).

Belongs to the LRFN family. Forms heteromeric complexes with LRFN1, LRFN3 and LRFN4. Can form homomeric complexes, but not across cell junctions. Can form heteromeric complexes with LRFN5. Interacts with DLG1, DLG3 and DLG4; interaction with DLG4 is mediated by the PDZ-binding domain. Also interacts with DLG2. Interacts with 2 NMDA receptor subunits GRIN1 and GRIN2A.

Its subcellular location is the membrane. It localises to the synapse. It is found in the postsynaptic cell membrane. In terms of biological role, promotes neurite outgrowth in hippocampal neurons. Enhances the cell surface expression of GRIN1 and GRIN2A NMDA receptor subunits. May play a role in redistributing DLG4 to the cell periphery. This is Leucine-rich repeat and fibronectin type-III domain-containing protein 2 (Lrfn2) from Rattus norvegicus (Rat).